The primary structure comprises 608 residues: Serine/threonine-protein kinase BUR1 (608 aa).

Residues 39 to 346 (YEIIQKLGQG…ALDALNHNYF (308 aa)) enclose the Protein kinase domain. ATP is bound by residues 45–53 (LGQGTFGVV) and lysine 68. Residue aspartate 174 is the Proton acceptor of the active site. Disordered stretches follow at residues 383-419 (HEAN…LALP) and 443-571 (YIPK…FDED). The segment covering 400–411 (YNNSNNYPRNRN) has biased composition (low complexity). Residues 471–482 (LRDRSPRREGHI) show a composition bias toward basic and acidic residues. Residues 487–502 (STTNSNNISSNSSASN) show a composition bias toward low complexity. Composition is skewed to polar residues over residues 503–512 (VGGTLSNPTH) and 539–548 (PQSSSRNVSD). Residues 559 to 571 (EQNESDLTDFDED) are compositionally biased toward acidic residues.

It belongs to the protein kinase superfamily. CMGC Ser/Thr protein kinase family. CDC2/CDKX subfamily.

It localises to the nucleus. The catalysed reaction is L-seryl-[protein] + ATP = O-phospho-L-seryl-[protein] + ADP + H(+). The enzyme catalyses L-threonyl-[protein] + ATP = O-phospho-L-threonyl-[protein] + ADP + H(+). It carries out the reaction [DNA-directed RNA polymerase] + ATP = phospho-[DNA-directed RNA polymerase] + ADP + H(+). Functionally, serine/threonine-protein kinase involved in transcription regulation. Phosphorylates the UBC2/RAD6 ubiquitin-conjugating enzyme (E2), leading to monoubiquitination of histone H2B and the silencing of telomeric-associated genes. Also required for histone H3 methylation. Necessary for the recovery from pheromone-induced growth arrest in the cell cycle G1 phase. This chain is Serine/threonine-protein kinase BUR1 (BUR1), found in Debaryomyces hansenii (strain ATCC 36239 / CBS 767 / BCRC 21394 / JCM 1990 / NBRC 0083 / IGC 2968) (Yeast).